The primary structure comprises 466 residues: Asparagine--tRNA ligase (466 aa).

This sequence belongs to the class-II aminoacyl-tRNA synthetase family. Homodimer.

The protein localises to the cytoplasm. The catalysed reaction is tRNA(Asn) + L-asparagine + ATP = L-asparaginyl-tRNA(Asn) + AMP + diphosphate + H(+). This chain is Asparagine--tRNA ligase, found in Myxococcus xanthus (strain DK1622).